A 114-amino-acid chain; its full sequence is Vacuolar ATPase assembly integral membrane protein VMA21 (114 aa).

Residues 1–39 (MATRRIISQEKTLLEKDDSIGSSPAADEKSNIAPAVPTS) lie on the Cytoplasmic side of the membrane. A helical membrane pass occupies residues 40–60 (VIMKLLAFTLGMIVIPIGSYF). The Lumenal portion of the chain corresponds to 61-73 (ATVDSVFNGNSTY). Residues 74–94 (AGALAAIMANVVLIGYIFVAM) form a helical membrane-spanning segment. Over 95–114 (AEDQSDQQEGGGPGDGKKDR) the chain is Cytoplasmic. Residues 111-114 (KKDR) carry the Prevents secretion from ER motif.

Belongs to the VMA21 family.

The protein localises to the endoplasmic reticulum membrane. Its subcellular location is the endoplasmic reticulum-Golgi intermediate compartment membrane. It localises to the cytoplasmic vesicle. It is found in the COPII-coated vesicle membrane. Its function is as follows. Required for the assembly of the V0 complex of the vacuolar ATPase (V-ATPase) in the endoplasmic reticulum. This chain is Vacuolar ATPase assembly integral membrane protein VMA21, found in Chaetomium globosum (strain ATCC 6205 / CBS 148.51 / DSM 1962 / NBRC 6347 / NRRL 1970) (Soil fungus).